A 149-amino-acid polypeptide reads, in one-letter code: Ribonuclease pancreatic alpha-type (149 aa).

Positions 1–25 are cleaved as a signal peptide; the sequence is MGLEKSFILFSLLVLVLGWVQPSLG. Residues Lys-32 and Arg-35 each coordinate substrate. The active-site Proton acceptor is His-37. Intrachain disulfides connect Cys-51-Cys-109, Cys-65-Cys-120, Cys-83-Cys-135, and Cys-90-Cys-97. Substrate is bound by residues 66–70, Lys-91, and Arg-110; that span reads KPVNT. The active-site Proton donor is the His-144.

It belongs to the pancreatic ribonuclease family. In terms of assembly, monomer.

It localises to the secreted. The catalysed reaction is an [RNA] containing cytidine + H2O = an [RNA]-3'-cytidine-3'-phosphate + a 5'-hydroxy-ribonucleotide-3'-[RNA].. It catalyses the reaction an [RNA] containing uridine + H2O = an [RNA]-3'-uridine-3'-phosphate + a 5'-hydroxy-ribonucleotide-3'-[RNA].. In terms of biological role, endonuclease that catalyzes the cleavage of RNA on the 3' side of pyrimidine nucleotides. Acts on single-stranded and double-stranded RNA. The polypeptide is Ribonuclease pancreatic alpha-type (Rattus fuscipes (Bush rat)).